A 208-amino-acid polypeptide reads, in one-letter code: Interleukin-6 (208 aa).

An N-terminal signal peptide occupies residues 1-20; sequence MNSLSTIAFSLGLLLVTATA. Cysteine 67 and cysteine 73 are disulfide-bonded. Position 76 is a phosphoserine (serine 76). A disulfide bridge links cysteine 96 with cysteine 106. Asparagine 167 carries an N-linked (GlcNAc...) asparagine glycan.

Belongs to the IL-6 superfamily. Component of a hexamer of two molecules each of IL6, IL6R and IL6ST; first binds to IL6R to associate with the signaling subunit IL6ST. Interacts with IL6R (via the N-terminal ectodomain); this interaction may be affected by IL6R-binding with SORL1, hence decreasing IL6 cis signaling. Interacts with SORL1 (via the N-terminal ectodomain); this interaction leads to IL6 internalization and lysosomal degradation. May form a trimeric complex with the soluble SORL1 ectodomain and soluble IL6R receptor; this interaction might stabilize circulating IL6, hence promoting IL6 trans signaling.

It localises to the secreted. Cytokine with a wide variety of biological functions in immunity, tissue regeneration, and metabolism. Binds to IL6R, then the complex associates to the signaling subunit IL6ST/gp130 to trigger the intracellular IL6-signaling pathway. The interaction with the membrane-bound IL6R and IL6ST stimulates 'classic signaling', whereas the binding of IL6 and soluble IL6R to IL6ST stimulates 'trans-signaling'. Alternatively, 'cluster signaling' occurs when membrane-bound IL6:IL6R complexes on transmitter cells activate IL6ST receptors on neighboring receiver cells. In terms of biological role, IL6 is a potent inducer of the acute phase response. Rapid production of IL6 contributes to host defense during infection and tissue injury, but excessive IL6 synthesis is involved in disease pathology. In the innate immune response, is synthesized by myeloid cells, such as macrophages and dendritic cells, upon recognition of pathogens through toll-like receptors (TLRs) at the site of infection or tissue injury. In the adaptive immune response, is required for the differentiation of B cells into immunoglobulin-secreting cells. Plays a major role in the differentiation of CD4(+) T cell subsets. Essential factor for the development of T follicular helper (Tfh) cells that are required for the induction of germinal-center formation. Required to drive naive CD4(+) T cells to the Th17 lineage. Also required for proliferation of myeloma cells and the survival of plasmablast cells. Functionally, acts as an essential factor in bone homeostasis and on vessels directly or indirectly by induction of VEGF, resulting in increased angiogenesis activity and vascular permeability. Induces, through 'trans-signaling' and synergistically with IL1B and TNF, the production of VEGF. Involved in metabolic controls, is discharged into the bloodstream after muscle contraction increasing lipolysis and improving insulin resistance. 'Trans-signaling' in central nervous system also regulates energy and glucose homeostasis. Mediates, through GLP-1, crosstalk between insulin-sensitive tissues, intestinal L cells and pancreatic islets to adapt to changes in insulin demand. Also acts as a myokine. Plays a protective role during liver injury, being required for maintenance of tissue regeneration. Also has a pivotal role in iron metabolism by regulating HAMP/hepcidin expression upon inflammation or bacterial infection. Through activation of IL6ST-YAP-NOTCH pathway, induces inflammation-induced epithelial regeneration. The polypeptide is Interleukin-6 (IL6) (Delphinapterus leucas (Beluga whale)).